Reading from the N-terminus, the 396-residue chain is Probable sugar efflux transporter (396 aa).

12 helical membrane passes run 15-35 (VVTL…PVGL), 50-70 (VGIM…PFML), 81-101 (LICL…AWNF), 103-123 (VLVI…SITA), 136-156 (AQAL…GLPI), 169-189 (TFFA…KLLP), 209-229 (PALM…YTAY), 246-266 (FATV…LVFG), 275-295 (SLVS…LPAA), 301-321 (LAIL…GMQV), 333-353 (VAMA…ALVG), and 364-384 (AIGY…VLIF).

The protein belongs to the major facilitator superfamily. SotB (TC 2.A.1.2) family.

The protein resides in the cell inner membrane. Its function is as follows. Involved in the efflux of sugars. The physiological role may be the reduction of the intracellular concentration of toxic sugars or sugar metabolites. This is Probable sugar efflux transporter from Salmonella schwarzengrund (strain CVM19633).